Consider the following 622-residue polypeptide: Low affinity potassium transport system protein Kup (622 aa).

The next 12 membrane-spanning stretches (helical) occupy residues 9–29 (LPAITLAAIGVVYGDIGTSPL), 49–69 (VFGFLSLIFWLLIFVVSIKYL), 103–123 (VIMGLIGGSFFYGEVVITPAI), 137–157 (PQLDTWIVPLSIIVLTLLFMI), 165–185 (VGKLFAPIMLTWFLILAGLGL), 213–233 (VSFIALGAVVLSITGGEALYA), 247–267 (WFTVVLPSLTLNYFGQGALLL), 276–296 (PFFLLAPDWALIPLLIIAALA), 337–357 (IYIPFVNWMLYVAVVIVIVSF), 363–383 (LAAAYGIAVTGTMVLTSILST), 396–416 (FVALILIAFLCVDIPLFTANL), and 419–439 (LLSGGWLPLSLGTVMFIVMTT).

It belongs to the HAK/KUP transporter (TC 2.A.72) family.

It is found in the cell inner membrane. It catalyses the reaction K(+)(in) + H(+)(in) = K(+)(out) + H(+)(out). Its function is as follows. Responsible for the low-affinity transport of potassium into the cell. Likely operates as a K(+):H(+) symporter. The sequence is that of Low affinity potassium transport system protein Kup from Shigella flexneri serotype 5b (strain 8401).